The chain runs to 214 residues: Probable nicotinate-nucleotide adenylyltransferase (214 aa).

This sequence belongs to the NadD family.

The catalysed reaction is nicotinate beta-D-ribonucleotide + ATP + H(+) = deamido-NAD(+) + diphosphate. It functions in the pathway cofactor biosynthesis; NAD(+) biosynthesis; deamido-NAD(+) from nicotinate D-ribonucleotide: step 1/1. Its function is as follows. Catalyzes the reversible adenylation of nicotinate mononucleotide (NaMN) to nicotinic acid adenine dinucleotide (NaAD). This chain is Probable nicotinate-nucleotide adenylyltransferase, found in Buchnera aphidicola subsp. Acyrthosiphon pisum (strain Tuc7).